Here is an 85-residue protein sequence, read N- to C-terminus: uncharacterized protein (85 aa).

The span at 64–76 (DPPVRRSGGREQH) shows a compositional bias: basic and acidic residues. Positions 64 to 85 (DPPVRRSGGREQHLAQVWRATS) are disordered.

This is an uncharacterized protein from Mycobacterium bovis (strain ATCC BAA-935 / AF2122/97).